A 218-amino-acid polypeptide reads, in one-letter code: UPF0598 protein C8orf82 homolog (218 aa).

Belongs to the UPF0598 family.

This chain is UPF0598 protein C8orf82 homolog, found in Mus musculus (Mouse).